The primary structure comprises 2346 residues: Highly reducing polyketide synthase claI (2346 aa).

The region spanning 10–412 is the Ketosynthase family 3 (KS3) domain; it reads TPAIAVVGMA…GTNCHLIVED (403 aa). Residues Cys183, His295, and His335 each act as for beta-ketoacyl synthase activity in the active site. A malonyl-CoA:ACP transacylase (MAT) domain region spans residues 530–842; it reads IFTGQGSQWP…EYFSALKRGE (313 aa). Ser622 functions as the For malonyltransferase activity in the catalytic mechanism. An N-terminal hotdog fold region spans residues 912 to 1048; that stretch reads HDLLGSKILG…GLIRTSEEDS (137 aa). The dehydratase (DH) domain stretch occupies residues 912 to 1213; that stretch reads HDLLGSKILG…INGLRFSSVD (302 aa). The PKS/mFAS DH domain occupies 912-1218; that stretch reads HDLLGSKILG…FSSVDLGSVQ (307 aa). His944 functions as the Proton acceptor; for dehydratase activity in the catalytic mechanism. The tract at residues 1060-1218 is C-terminal hotdog fold; sequence IHATPAQVWY…FSSVDLGSVQ (159 aa). Catalysis depends on Asp1124, which acts as the Proton donor; for dehydratase activity. Residues 1633 to 1946 form an enoyl reductase (ER) domain region; the sequence is GSLEALQWTQ…SARHIGKILI (314 aa). The tract at residues 1972-2151 is ketoreductase (KR) domain; the sequence is TYLIVGGLRG…HSLDLGVVDA (180 aa). Residues 2258–2336 form the Carrier domain; sequence SQLVEKAVTL…ALAEKMVSKV (79 aa). The residue at position 2296 (Ser2296) is an O-(pantetheine 4'-phosphoryl)serine.

The cofactor is pantetheine 4'-phosphate.

Its pathway is secondary metabolite biosynthesis. In terms of biological role, highly reducing polyketide synthase; part of the cla gene cluster that produces clavatol and ortho-quinone methide. The clavatol biosynthesis cluster cla and the terrestric acid cluster tra are both involved in the production of peniphenones and penilactones. The non-reducing PKS claF is responsible for the formation of clavatol from successive condensations of 3 malonyl-CoA units, presumably with a simple acetyl-CoA starter unit, and 2 methylation steps. The esterase claE probably collaborates with claF by catalyzing the hydrolysis of ACP-bound acyl intermediates to free the ACP from stalled intermediates. The clavatol oxidase claD then converts clavatol to hydroxyclavatol. Spontaneous dehydration of hydroxyclavatol leads to the accumulation of the highly active ortho-quinone methide. On the other hand, the PKS-NRPS hybrid traA is involved in the formation of crustosic acid, with the help of traB and traD. The polyketide synthase module (PKS) of traA is responsible for the synthesis of the polyketide backbone via the condensation of an acetyl-CoA starter unit with 3 malonyl-CoA units. The downstream nonribosomal peptide synthetase (NRPS) module then amidates the carboxyl end of the polyketide with L-malic acid. Because traA lacks a designated enoylreductase (ER) domain, the required activity is provided the enoyl reductase traG. Crustosic acid undergoes decarboxylation and isomerization to the terrestric acid, catalyzed by the 2-oxoglutarate-dependent dioxygenase traH. Both acids are further converted to the 2 gamma-butyrolactones (R)-5-methyltetronic acid and (S)-5-carboxylmethyltetronic acid, with involvement of the cytochrome P450 monooxygenase claJ. Spontaneous addition of the methide to these gamma-butyrolactones leads to peniphenone D and penilactone D, which undergo again stereospecific attacking by methide to give penilactones A and B. The function of the highly reducing polyketide synthase claI has not been investigated yet. The protein is Highly reducing polyketide synthase claI of Penicillium crustosum (Blue mold fungus).